A 560-amino-acid polypeptide reads, in one-letter code: Formate--tetrahydrofolate ligase (560 aa).

70–77 provides a ligand contact to ATP; the sequence is TPAGEGKT.

It belongs to the formate--tetrahydrofolate ligase family.

It carries out the reaction (6S)-5,6,7,8-tetrahydrofolate + formate + ATP = (6R)-10-formyltetrahydrofolate + ADP + phosphate. Its pathway is one-carbon metabolism; tetrahydrofolate interconversion. The protein is Formate--tetrahydrofolate ligase of Methanocorpusculum labreanum (strain ATCC 43576 / DSM 4855 / Z).